Reading from the N-terminus, the 145-residue chain is uncharacterized protein (145 aa).

A coiled-coil region spans residues 1-41 (MEQHYHQQNQLRQLKQQQLKELLQQQSKDKEEDEQKHDDYR). Residues 1 to 91 (MEQHYHQQNQ…LQISEPEGES (91 aa)) form a disordered region. Positions 7-26 (QQNQLRQLKQQQLKELLQQQ) are enriched in low complexity. Residues 27 to 42 (SKDKEEDEQKHDDYRS) are compositionally biased toward basic and acidic residues. Low complexity predominate over residues 43-58 (PTKTTTTTATSTSAAT).

This is an uncharacterized protein from Dictyostelium discoideum (Social amoeba).